Consider the following 314-residue polypeptide: 4-hydroxy-3-methylbut-2-enyl diphosphate reductase (314 aa).

Cysteine 18 provides a ligand contact to [4Fe-4S] cluster. 2 residues coordinate (2E)-4-hydroxy-3-methylbut-2-enyl diphosphate: histidine 47 and histidine 80. Histidine 47 and histidine 80 together coordinate dimethylallyl diphosphate. Residues histidine 47 and histidine 80 each coordinate isopentenyl diphosphate. A [4Fe-4S] cluster-binding site is contributed by cysteine 102. Residue histidine 130 participates in (2E)-4-hydroxy-3-methylbut-2-enyl diphosphate binding. Histidine 130 serves as a coordination point for dimethylallyl diphosphate. Histidine 130 is a binding site for isopentenyl diphosphate. The Proton donor role is filled by glutamate 132. Residue threonine 171 participates in (2E)-4-hydroxy-3-methylbut-2-enyl diphosphate binding. Position 201 (cysteine 201) interacts with [4Fe-4S] cluster. Positions 229, 230, 231, and 273 each coordinate (2E)-4-hydroxy-3-methylbut-2-enyl diphosphate. Dimethylallyl diphosphate contacts are provided by serine 229, serine 230, asparagine 231, and serine 273. Serine 229, serine 230, asparagine 231, and serine 273 together coordinate isopentenyl diphosphate.

The protein belongs to the IspH family. The cofactor is [4Fe-4S] cluster.

The catalysed reaction is isopentenyl diphosphate + 2 oxidized [2Fe-2S]-[ferredoxin] + H2O = (2E)-4-hydroxy-3-methylbut-2-enyl diphosphate + 2 reduced [2Fe-2S]-[ferredoxin] + 2 H(+). The enzyme catalyses dimethylallyl diphosphate + 2 oxidized [2Fe-2S]-[ferredoxin] + H2O = (2E)-4-hydroxy-3-methylbut-2-enyl diphosphate + 2 reduced [2Fe-2S]-[ferredoxin] + 2 H(+). It functions in the pathway isoprenoid biosynthesis; dimethylallyl diphosphate biosynthesis; dimethylallyl diphosphate from (2E)-4-hydroxy-3-methylbutenyl diphosphate: step 1/1. The protein operates within isoprenoid biosynthesis; isopentenyl diphosphate biosynthesis via DXP pathway; isopentenyl diphosphate from 1-deoxy-D-xylulose 5-phosphate: step 6/6. Catalyzes the conversion of 1-hydroxy-2-methyl-2-(E)-butenyl 4-diphosphate (HMBPP) into a mixture of isopentenyl diphosphate (IPP) and dimethylallyl diphosphate (DMAPP). Acts in the terminal step of the DOXP/MEP pathway for isoprenoid precursor biosynthesis. This chain is 4-hydroxy-3-methylbut-2-enyl diphosphate reductase, found in Phenylobacterium zucineum (strain HLK1).